Here is a 1461-residue protein sequence, read N- to C-terminus: Calmodulin-regulated spectrin-associated protein 2 (1461 aa).

The region spanning 211-324 is the Calponin-homology (CH) domain; that stretch reads PGGQKARYRK…FMAELFWWFE (114 aa). Residues 361–389 are disordered; the sequence is RDSSSSSDFSSRYTRPQTHSSASGGIRRS. 2 stretches are compositionally biased toward low complexity: residues 362–371 and 380–389; these read DSSSSSDFSS and SSASGGIRRS. Phosphoserine occurs at positions 391 and 393. Threonine 401 bears the Phosphothreonine mark. A phosphoserine mark is found at serine 439, serine 572, serine 573, serine 585, and serine 647. 2 disordered regions span residues 573–613 and 639–704; these read SPDN…EDSS and ASNP…GSEL. Residue threonine 652 is modified to Phosphothreonine. Serine 654 carries the phosphoserine modification. A compositionally biased stretch (low complexity) spans 654 to 673; it reads STKSQPGSSASSSSGVKMTS. Residues 677 to 687 show a composition bias toward basic and acidic residues; it reads QKFRKLNHTDG. Positions 730-767 form a coiled coil; sequence LLASEMVHLRMRLEEKRRAIEAQKKKMEAAFTKQRQKM. Over residues 787 to 826 the composition is skewed to basic and acidic residues; the sequence is REEAAGAEDEKVYTDRAKERESQKMDGQRSKSLADIKESM. A disordered region spans residues 787 to 855; that stretch reads REEAAGAEDE…QWNLTSPSEE (69 aa). Serine 836 bears the Phosphoserine mark. Residues 861-900 are a coiled coil; that stretch reads EILEYTKSIEKLNSSLHFLQQEMQRLSLQQEMLMQMREQQ. Residues 896–1007 form an MBD region region; sequence MREQQAWVIS…IQTRSFVCFG (112 aa). 2 positions are modified to phosphoserine: serine 905 and serine 910. Disordered stretches follow at residues 921–992, 1004–1044, 1069–1090, 1102–1124, and 1163–1321; these read RQAG…RRFS, VCFG…GEKE, NEDQ…PTAP, DLKP…DKEQ, and KETQ…EYTG. Residues 926–937 are compositionally biased toward low complexity; that stretch reads SSAAAPFSSDSP. The span at 943-962 shows a compositional bias: polar residues; the sequence is SPQSSTRKSASFSVKNQRTP. Phosphothreonine is present on residues threonine 970, threonine 975, and threonine 977. Serine 981 and serine 992 each carry phosphoserine. Over residues 1011–1028 the composition is skewed to basic and acidic residues; that stretch reads EPQKEPKQKEEIKKEPSE. A compositionally biased stretch (pro residues) spans 1077-1089; it reads TEPPPKPVFPPTA. Basic and acidic residues-rich tracts occupy residues 1104-1124 and 1163-1224; these read KPPE…DKEQ and KETQ…DTVI. Serine 1120 carries the post-translational modification Phosphoserine. Residues 1138 to 1210 adopt a coiled-coil conformation; the sequence is KDDQKAENDM…REFIRQEYMR (73 aa). Positions 1259–1271 are enriched in polar residues; the sequence is SSLSLASLNTGDS. Phosphoserine occurs at positions 1285, 1291, and 1293. The segment covering 1306–1318 has biased composition (polar residues); the sequence is NASTTSSVASGTE. The region spanning 1321-1455 is the CKK domain; it reads GPKLYKEPSA…QTKRPVTPKK (135 aa).

This sequence belongs to the CAMSAP1 family. In terms of assembly, interacts with CAMSAP3. Interacts with KATNA1 and KATNB1; leading to regulate the length of CAMSAP2-decorated microtubule stretches. Interacts with a complex formed by AKAP9 and PDE4DIP isoform 2/MMG8/SMYLE, which recruits CAMSAP2 to the Golgi. Interacts with MAPRE1/EB1.

It is found in the cytoplasm. The protein resides in the cytoskeleton. Its subcellular location is the golgi apparatus. It localises to the cilium basal body. Its function is as follows. Key microtubule-organizing protein that specifically binds the minus-end of non-centrosomal microtubules and regulates their dynamics and organization. Specifically recognizes growing microtubule minus-ends and autonomously decorates and stabilizes microtubule lattice formed by microtubule minus-end polymerization. Acts on free microtubule minus-ends that are not capped by microtubule-nucleating proteins or other factors and protects microtubule minus-ends from depolymerization. In addition, it also reduces the velocity of microtubule polymerization. Through the microtubule cytoskeleton, also regulates the organization of cellular organelles including the Golgi and the early endosomes. Essential for the tethering, but not for nucleation of non-centrosomal microtubules at the Golgi: together with Golgi-associated proteins AKAP9 and PDE4DIP, required to tether non-centrosomal minus-end microtubules to the Golgi, an important step for polarized cell movement. Also acts as a regulator of neuronal polarity and development: localizes to non-centrosomal microtubule minus-ends in neurons and stabilizes non-centrosomal microtubules, which is required for neuronal polarity, axon specification and dendritic branch formation. Through the microtubule cytoskeleton, regulates the autophagosome transport. This is Calmodulin-regulated spectrin-associated protein 2 from Mus musculus (Mouse).